The sequence spans 593 residues: Pyruvate decarboxylase 1 (593 aa).

The span at 1-19 shows a compositional bias: polar residues; sequence METETETPNGSTPCPTSAP. Residues 1–20 are disordered; the sequence is METETETPNGSTPCPTSAPS. Substrate is bound by residues aspartate 55 and histidine 142. The tract at residues 420-502 is thiamine pyrophosphate binding; sequence DSWFNCQKLR…FLINNGGYTI (83 aa). 3 residues coordinate Mg(2+): aspartate 470, asparagine 497, and glycine 499. Glutamate 503 contributes to the substrate binding site.

It belongs to the TPP enzyme family. Homotetramer. A metal cation serves as cofactor. Thiamine diphosphate is required as a cofactor.

It carries out the reaction a 2-oxocarboxylate + H(+) = an aldehyde + CO2. This is Pyruvate decarboxylase 1 (PDC1) from Pisum sativum (Garden pea).